Reading from the N-terminus, the 228-residue chain is Urease accessory protein UreF (228 aa).

Belongs to the UreF family. As to quaternary structure, ureD, UreF and UreG form a complex that acts as a GTP-hydrolysis-dependent molecular chaperone, activating the urease apoprotein by helping to assemble the nickel containing metallocenter of UreC. The UreE protein probably delivers the nickel.

Its subcellular location is the cytoplasm. In terms of biological role, required for maturation of urease via the functional incorporation of the urease nickel metallocenter. The sequence is that of Urease accessory protein UreF from Alkalilimnicola ehrlichii (strain ATCC BAA-1101 / DSM 17681 / MLHE-1).